Consider the following 86-residue polypeptide: Conotoxin S6.10 (86 aa).

A signal peptide spans 1 to 22 (MKLTCVLIIAVLFLTACQLATA). Positions 23 to 45 (KTYSKGRQKHRALRSTDKNIKLT) are excised as a propeptide. 3 disulfide bridges follow: Cys-48/Cys-62, Cys-55/Cys-66, and Cys-61/Cys-73.

It belongs to the conotoxin O1 superfamily. Expressed by the venom duct.

It localises to the secreted. The chain is Conotoxin S6.10 from Conus striatus (Striated cone).